The following is a 267-amino-acid chain: Strigolactone esterase D14 (267 aa).

The active-site Nucleophile is S97. Catalysis depends on residues D218 and H247.

Belongs to the AB hydrolase superfamily. In terms of assembly, interacts with SMXL6, SMXL7 and SMXL8. The interaction with SMXLs occurs in the presence of (2'R) stereoisomers of strigolactones, but not (2'S) stereoisomers. Interacts with MAX2. Forms a complex with MAX2 and SKP1A/ASK1 in presence of strigolactone. Expressed at high levels in rosette and cauline leaves and at lower levels in axillary buds, inflorescences, stems, roots and developing vascular tissue of cotyledons.

Its subcellular location is the cytoplasm. It is found in the nucleus. In terms of biological role, involved in strigolactone signaling pathway. Does not move long distances acropetally in the plant to regulate shoot branching and is rapidly degraded in the presence of strigolactones. Functions downstream of strigolactone synthesis, as a component of hormone signaling and as an enzyme that participates in the conversion of strigolactones to the bioactive form. Acts probably as a strigolactone receptor. Strigolactones are hormones that inhibit tillering and shoot branching through the MAX-dependent pathway, contribute to the regulation of shoot architectural response to phosphate-limiting conditions and function as rhizosphere signal that stimulates hyphal branching of arbuscular mycorrhizal fungi and trigger seed germination of root parasitic weeds. Hydrolyzes methyl carlactonoate (MeCLA), but not carlactone (CL) or carlactonoic acid (CLA). Hydrolyzes the butenolide ring of strigolactones. The initial nucleophilic attack causes an electron shift, followed by the addition of a water molecule, to lead to the release of the ABC ring product and the formation of a 'Ser-97'-stabilized open lactone intermediate. Has no esterase activity for 4-nitrophenyl butyrate. Binds and hydrolyzes the synthetic strigolactone analog GR24 in vitro. Forms a stable covalent complex with the D-ring of strigolactone, which is essential for hormone bioactivity. The D-ring is attached to His-247 of the catalytic triad. The hydrolysis of strigolactone into a covalently linked intermediate molecule initiates a conformational change of D14 to facilitate interaction with MAX2 and formation of the D14-MAX2-SKP1/ASK1 complex to trigger strigolactone signaling. This mechanism defines D14 as a non-canonical hormone receptor with dual functions to generate and sense the active form of strigolactone. In Arabidopsis thaliana (Mouse-ear cress), this protein is Strigolactone esterase D14.